A 189-amino-acid chain; its full sequence is Interferon alpha-5 (189 aa).

Residues 1–21 (MALPFVLLMALVVLNCKSICS) form the signal peptide. Disulfide bonds link Cys24/Cys122 and Cys52/Cys162.

The protein belongs to the alpha/beta interferon family.

The protein resides in the secreted. Functionally, produced by macrophages, IFN-alpha have antiviral activities. Interferon stimulates the production of two enzymes: a protein kinase and an oligoadenylate synthetase. This chain is Interferon alpha-5 (IFNA5), found in Homo sapiens (Human).